The sequence spans 133 residues: Ribosome-binding factor A (133 aa).

It belongs to the RbfA family. Monomer. Binds 30S ribosomal subunits, but not 50S ribosomal subunits or 70S ribosomes.

Its subcellular location is the cytoplasm. In terms of biological role, one of several proteins that assist in the late maturation steps of the functional core of the 30S ribosomal subunit. Associates with free 30S ribosomal subunits (but not with 30S subunits that are part of 70S ribosomes or polysomes). Required for efficient processing of 16S rRNA. May interact with the 5'-terminal helix region of 16S rRNA. This is Ribosome-binding factor A from Bordetella bronchiseptica (strain ATCC BAA-588 / NCTC 13252 / RB50) (Alcaligenes bronchisepticus).